The primary structure comprises 359 residues: uncharacterized protein (359 aa).

Positions 163–275 constitute a PINc domain; it reads VVDTSCIIDG…SKVANLQKVQ (113 aa). Mg(2+)-binding residues include Asp165 and Asp244. A TRAM domain is found at 289-350; that stretch reads IYLPGDSLEL…LQTSAGRMIF (62 aa).

This sequence belongs to the ycf81 family. In the central section; belongs to the PINc/VapC protein family. Mg(2+) serves as cofactor.

In terms of biological role, an RNase. This is an uncharacterized protein from Synechocystis sp. (strain ATCC 27184 / PCC 6803 / Kazusa).